The following is a 316-amino-acid chain: Ribosomal RNA small subunit methyltransferase H (316 aa).

Residues alanine 35 to histidine 37, aspartate 55, phenylalanine 84, aspartate 105, and glutamine 112 contribute to the S-adenosyl-L-methionine site.

This sequence belongs to the methyltransferase superfamily. RsmH family.

It is found in the cytoplasm. It catalyses the reaction cytidine(1402) in 16S rRNA + S-adenosyl-L-methionine = N(4)-methylcytidine(1402) in 16S rRNA + S-adenosyl-L-homocysteine + H(+). Specifically methylates the N4 position of cytidine in position 1402 (C1402) of 16S rRNA. This chain is Ribosomal RNA small subunit methyltransferase H, found in Streptococcus pneumoniae serotype 4 (strain ATCC BAA-334 / TIGR4).